Reading from the N-terminus, the 104-residue chain is ATP-dependent Clp protease adapter protein ClpS (104 aa).

Belongs to the ClpS family. In terms of assembly, binds to the N-terminal domain of the chaperone ClpA.

Functionally, involved in the modulation of the specificity of the ClpAP-mediated ATP-dependent protein degradation. The protein is ATP-dependent Clp protease adapter protein ClpS of Bordetella bronchiseptica (strain ATCC BAA-588 / NCTC 13252 / RB50) (Alcaligenes bronchisepticus).